The sequence spans 425 residues: Serine--tRNA ligase (425 aa).

228–230 serves as a coordination point for L-serine; that stretch reads TSE. 259–261 is a binding site for ATP; sequence RSE. Residue E282 coordinates L-serine. Position 346–349 (346–349) interacts with ATP; sequence EISS. S384 contacts L-serine.

It belongs to the class-II aminoacyl-tRNA synthetase family. Type-1 seryl-tRNA synthetase subfamily. Homodimer. The tRNA molecule binds across the dimer.

It is found in the cytoplasm. The catalysed reaction is tRNA(Ser) + L-serine + ATP = L-seryl-tRNA(Ser) + AMP + diphosphate + H(+). The enzyme catalyses tRNA(Sec) + L-serine + ATP = L-seryl-tRNA(Sec) + AMP + diphosphate + H(+). It participates in aminoacyl-tRNA biosynthesis; selenocysteinyl-tRNA(Sec) biosynthesis; L-seryl-tRNA(Sec) from L-serine and tRNA(Sec): step 1/1. Catalyzes the attachment of serine to tRNA(Ser). Is also able to aminoacylate tRNA(Sec) with serine, to form the misacylated tRNA L-seryl-tRNA(Sec), which will be further converted into selenocysteinyl-tRNA(Sec). The polypeptide is Serine--tRNA ligase (Ehrlichia ruminantium (strain Gardel)).